Here is a 199-residue protein sequence, read N- to C-terminus: DNA dC-&gt;dU-editing enzyme APOBEC-3A (199 aa).

The 117-residue stretch at 27–143 (GRHKTYLCYE…PLYKEALQML (117 aa)) folds into the CMP/dCMP-type deaminase domain. Residue H70 coordinates Zn(2+). The active-site Proton donor is E72. Zn(2+) is bound by residues C101 and C106.

This sequence belongs to the cytidine and deoxycytidylate deaminase family. Interacts with AGO2. Interacts with TRIB3 (via N-terminus). Zn(2+) serves as cofactor. Expressed in peripheral leukocytes with higher expression in CD14-positive phagocytic cells. Highly expressed in keratinocytes and in periphery blood monocytes. Also detected in non-lymphoid tissues including lung and adipose tissues. Found at high levels in colorectal adenocarcinoma, Burkitt's lymphoma and chronic myelogenous leukemia.

The protein localises to the nucleus. It localises to the cytoplasm. It catalyses the reaction a 2'-deoxycytidine in single-stranded DNA + H2O + H(+) = a 2'-deoxyuridine in single-stranded DNA + NH4(+). DNA deaminase (cytidine deaminase) with restriction activity against viruses, foreign DNA and mobility of retrotransposons. Exhibits antiviral activity against adeno-associated virus (AAV) and human T-cell leukemia virus type 1 (HTLV-1) and may inhibit the mobility of LTR and non-LTR retrotransposons. Selectively targets single-stranded DNA and can deaminate both methylcytosine and cytosine in foreign DNA. Can induce somatic hypermutation in the nuclear and mitochondrial DNA. May also play a role in the epigenetic regulation of gene expression through the process of active DNA demethylation. This chain is DNA dC-&gt;dU-editing enzyme APOBEC-3A (APOBEC3A), found in Homo sapiens (Human).